The chain runs to 396 residues: Phosphoglycerate kinase (396 aa).

Substrate-binding positions include 24-26, Arg-39, 62-65, Arg-120, and Arg-153; these read DFN and HLGR. Residues Lys-203, Gly-294, Glu-325, and 352-355 contribute to the ATP site; that span reads GGDS.

Belongs to the phosphoglycerate kinase family. In terms of assembly, monomer.

It is found in the cytoplasm. The enzyme catalyses (2R)-3-phosphoglycerate + ATP = (2R)-3-phospho-glyceroyl phosphate + ADP. Its pathway is carbohydrate degradation; glycolysis; pyruvate from D-glyceraldehyde 3-phosphate: step 2/5. This chain is Phosphoglycerate kinase, found in Dictyoglomus turgidum (strain DSM 6724 / Z-1310).